Here is a 250-residue protein sequence, read N- to C-terminus: 2,3-bisphosphoglycerate-dependent phosphoglycerate mutase (250 aa).

Residues 10–17 (RHGESVWN), 23–24 (TG), R62, 89–92 (ERHY), K100, 116–117 (RR), and 185–186 (GN) contribute to the substrate site. H11 serves as the catalytic Tele-phosphohistidine intermediate. E89 acts as the Proton donor/acceptor in catalysis.

The protein belongs to the phosphoglycerate mutase family. BPG-dependent PGAM subfamily. Homodimer.

It catalyses the reaction (2R)-2-phosphoglycerate = (2R)-3-phosphoglycerate. It participates in carbohydrate degradation; glycolysis; pyruvate from D-glyceraldehyde 3-phosphate: step 3/5. Its function is as follows. Catalyzes the interconversion of 2-phosphoglycerate and 3-phosphoglycerate. The sequence is that of 2,3-bisphosphoglycerate-dependent phosphoglycerate mutase from Proteus mirabilis (strain HI4320).